A 472-amino-acid chain; its full sequence is Protein c-ets-2-B (472 aa).

The PNT domain maps to 85–170 (DTFNGFAKER…EHLEEMMKEY (86 aa)). Positions 366-446 (IQLWQFLLEL…SGKRYVYRFV (81 aa)) form a DNA-binding region, ETS.

It belongs to the ETS family.

It localises to the nucleus. Functionally, probable transcription factor. In Xenopus laevis (African clawed frog), this protein is Protein c-ets-2-B (ets2-b).